Reading from the N-terminus, the 275-residue chain is 2,3,4,5-tetrahydropyridine-2,6-dicarboxylate N-succinyltransferase (275 aa).

It belongs to the transferase hexapeptide repeat family.

The protein resides in the cytoplasm. It carries out the reaction (S)-2,3,4,5-tetrahydrodipicolinate + succinyl-CoA + H2O = (S)-2-succinylamino-6-oxoheptanedioate + CoA. Its pathway is amino-acid biosynthesis; L-lysine biosynthesis via DAP pathway; LL-2,6-diaminopimelate from (S)-tetrahydrodipicolinate (succinylase route): step 1/3. The polypeptide is 2,3,4,5-tetrahydropyridine-2,6-dicarboxylate N-succinyltransferase (Paraburkholderia phytofirmans (strain DSM 17436 / LMG 22146 / PsJN) (Burkholderia phytofirmans)).